Here is a 445-residue protein sequence, read N- to C-terminus: Phosphoglucosamine mutase (445 aa).

The active-site Phosphoserine intermediate is Ser-99. Mg(2+) is bound by residues Ser-99, Asp-242, Asp-244, and Asp-246. Phosphoserine is present on Ser-99.

Belongs to the phosphohexose mutase family. Mg(2+) serves as cofactor. In terms of processing, activated by phosphorylation.

The enzyme catalyses alpha-D-glucosamine 1-phosphate = D-glucosamine 6-phosphate. Its function is as follows. Catalyzes the conversion of glucosamine-6-phosphate to glucosamine-1-phosphate. This is Phosphoglucosamine mutase from Campylobacter jejuni subsp. jejuni serotype O:23/36 (strain 81-176).